The chain runs to 412 residues: CinA-like protein (412 aa).

This sequence belongs to the CinA family.

This chain is CinA-like protein, found in Kosmotoga olearia (strain ATCC BAA-1733 / DSM 21960 / TBF 19.5.1).